A 552-amino-acid polypeptide reads, in one-letter code: CTP synthase (552 aa).

The interval 1–267 is amidoligase domain; that stretch reads MSKFVFVTGG…AHQTLELLRM (267 aa). Position 13 (Ser13) interacts with CTP. Ser13 contributes to the UTP binding site. Residues 14-19 and Asp71 contribute to the ATP site; that span reads SIGKGI. Asp71 and Glu141 together coordinate Mg(2+). Residues 148–150, 188–193, and Lys224 each bind CTP; these read DIE and KTKPTQ. UTP contacts are provided by residues 188 to 193 and Lys224; that span reads KTKPTQ. The Glutamine amidotransferase type-1 domain maps to 292–534; sequence TVALVGKYVQ…INAVLKRRNA (243 aa). An L-glutamine-binding site is contributed by Gly354. Residue Cys381 is the Nucleophile; for glutamine hydrolysis of the active site. L-glutamine contacts are provided by residues 382–385, Glu405, and Arg462; that span reads LGMQ. Active-site residues include His507 and Glu509.

This sequence belongs to the CTP synthase family. In terms of assembly, homotetramer.

The enzyme catalyses UTP + L-glutamine + ATP + H2O = CTP + L-glutamate + ADP + phosphate + 2 H(+). It catalyses the reaction L-glutamine + H2O = L-glutamate + NH4(+). The catalysed reaction is UTP + NH4(+) + ATP = CTP + ADP + phosphate + 2 H(+). It participates in pyrimidine metabolism; CTP biosynthesis via de novo pathway; CTP from UDP: step 2/2. Allosterically activated by GTP, when glutamine is the substrate; GTP has no effect on the reaction when ammonia is the substrate. The allosteric effector GTP functions by stabilizing the protein conformation that binds the tetrahedral intermediate(s) formed during glutamine hydrolysis. Inhibited by the product CTP, via allosteric rather than competitive inhibition. In terms of biological role, catalyzes the ATP-dependent amination of UTP to CTP with either L-glutamine or ammonia as the source of nitrogen. Regulates intracellular CTP levels through interactions with the four ribonucleotide triphosphates. The protein is CTP synthase of Synechocystis sp. (strain ATCC 27184 / PCC 6803 / Kazusa).